Reading from the N-terminus, the 321-residue chain is NADPH-dependent codeinone reductase 1-4 (321 aa).

2 residues coordinate NADPH: Thr-27 and Asp-51. Catalysis depends on proton donor residues Tyr-56 and His-119. Substrate is bound at residue His-119. NADPH contacts are provided by Ser-165, Gln-187, Ser-214, Leu-216, Ser-264, and Arg-269. Positions 299-321 (SADFLLSPTGPFKTEEEFWDEKD) are disordered.

This sequence belongs to the aldo/keto reductase family. Latex secreting cells (laticifer cells). Expressed constitutively in all organs with highest levels in capsules. Restricted to the parietal region of sieve elements adjacent or proximal to laticifers in roots, stems, leaves and carpels.

It localises to the cytoplasm. The protein localises to the cytosol. The catalysed reaction is codeine + NADP(+) = codeinone + NADPH + H(+). The enzyme catalyses neopine + NADP(+) = neopinone + NADPH + H(+). It carries out the reaction morphine + NADP(+) = morphinone + NADPH + H(+). It catalyses the reaction neomorphine + NADP(+) = neomorphinone + NADPH + H(+). It participates in alkaloid biosynthesis; morphine biosynthesis. Its function is as follows. NADPH-dependent codeinone reductase involved in biosynthesis of morphinan-type benzylisoquinoline and opiate alkaloids natural products. Reduces codeinone to codeine in the penultimate step in morphine biosynthesis. Can use morphinone, hydrocodone and hydromorphone as substrate during reductive reaction with NADPH as cofactor, and morphine and dihydrocodeine as substrate during oxidative reaction with NADP as cofactor. Converts morphinone to morphine, and neomorphinone to neomorphine. Reduces irreversibly neopinone, a spontaneous isomer of codeinone, to neopine; in planta, neopine levels are limited to low levels. This is NADPH-dependent codeinone reductase 1-4 from Papaver somniferum (Opium poppy).